The chain runs to 441 residues: Serine/threonine-protein kinase prk-2 (441 aa).

In terms of domain architecture, Protein kinase spans 31 to 285 (YKLKAELGRG…LEAILNHPWV (255 aa)). ATP-binding positions include 37 to 45 (LGRGGFGVV) and lysine 60. The Proton acceptor role is filled by aspartate 158. Residues 301–364 (QKKTSESSDD…NQKKPNHKEF (64 aa)) are disordered. Residues 303-320 (KTSESSDDHHSETLGDHS) show a composition bias toward basic and acidic residues. Residues 328–338 (PPTSSVSQQPG) show a composition bias toward polar residues.

Belongs to the protein kinase superfamily. Ser/Thr protein kinase family. PIM subfamily. The cofactor is Mg(2+).

The catalysed reaction is L-seryl-[protein] + ATP = O-phospho-L-seryl-[protein] + ADP + H(+). The enzyme catalyses L-threonyl-[protein] + ATP = O-phospho-L-threonyl-[protein] + ADP + H(+). Involved in the negative regulation of synaptic differentiation in PLM neurons. The protein is Serine/threonine-protein kinase prk-2 of Caenorhabditis elegans.